The following is an 83-amino-acid chain: Small ribosomal subunit protein uS17 (83 aa).

The protein belongs to the universal ribosomal protein uS17 family. In terms of assembly, part of the 30S ribosomal subunit.

One of the primary rRNA binding proteins, it binds specifically to the 5'-end of 16S ribosomal RNA. The sequence is that of Small ribosomal subunit protein uS17 from Chlamydia abortus (strain DSM 27085 / S26/3) (Chlamydophila abortus).